Here is a 202-residue protein sequence, read N- to C-terminus: Orotate phosphoribosyltransferase (202 aa).

Residues K93 and 113 to 121 each bind 5-phospho-alpha-D-ribose 1-diphosphate; that span reads EDIITTGGS. Residues T117 and R145 each contribute to the orotate site.

The protein belongs to the purine/pyrimidine phosphoribosyltransferase family. PyrE subfamily. As to quaternary structure, homodimer. The cofactor is Mg(2+).

The enzyme catalyses orotidine 5'-phosphate + diphosphate = orotate + 5-phospho-alpha-D-ribose 1-diphosphate. Its pathway is pyrimidine metabolism; UMP biosynthesis via de novo pathway; UMP from orotate: step 1/2. In terms of biological role, catalyzes the transfer of a ribosyl phosphate group from 5-phosphoribose 1-diphosphate to orotate, leading to the formation of orotidine monophosphate (OMP). The polypeptide is Orotate phosphoribosyltransferase (Campylobacter jejuni subsp. jejuni serotype O:23/36 (strain 81-176)).